Reading from the N-terminus, the 220-residue chain is 7-cyano-7-deazaguanine synthase (220 aa).

Residue F10–L20 coordinates ATP. Zn(2+) contacts are provided by C186, C195, C198, and C201.

It belongs to the QueC family. In terms of assembly, homodimer. Zn(2+) serves as cofactor.

The enzyme catalyses 7-carboxy-7-deazaguanine + NH4(+) + ATP = 7-cyano-7-deazaguanine + ADP + phosphate + H2O + H(+). It participates in purine metabolism; 7-cyano-7-deazaguanine biosynthesis. Its function is as follows. Catalyzes the ATP-dependent conversion of 7-carboxy-7-deazaguanine (CDG) to 7-cyano-7-deazaguanine (preQ(0)). The polypeptide is 7-cyano-7-deazaguanine synthase (Bacillus thuringiensis (strain Al Hakam)).